Reading from the N-terminus, the 409-residue chain is Argininosuccinate synthase (409 aa).

ATP-binding positions include 11 to 19 and Ala-38; that span reads AYSGGLDTS. Residues Tyr-91 and Ser-96 each contribute to the L-citrulline site. An ATP-binding site is contributed by Gly-121. L-aspartate is bound by residues Thr-123, Asn-127, and Asp-128. Asn-127 is a binding site for L-citrulline. Positions 131, 182, 191, 267, and 279 each coordinate L-citrulline.

Belongs to the argininosuccinate synthase family. Type 1 subfamily. In terms of assembly, homotetramer.

It localises to the cytoplasm. The enzyme catalyses L-citrulline + L-aspartate + ATP = 2-(N(omega)-L-arginino)succinate + AMP + diphosphate + H(+). Its pathway is amino-acid biosynthesis; L-arginine biosynthesis; L-arginine from L-ornithine and carbamoyl phosphate: step 2/3. This chain is Argininosuccinate synthase, found in Xanthobacter autotrophicus (strain ATCC BAA-1158 / Py2).